A 217-amino-acid polypeptide reads, in one-letter code: Pyridoxine/pyridoxamine 5'-phosphate oxidase (217 aa).

Substrate contacts are provided by residues 13 to 16 (RREY) and Lys71. Residues 66 to 71 (RIVLLK), 81 to 82 (YT), Arg87, Lys88, and Gln110 each bind FMN. 3 residues coordinate substrate: Tyr128, Arg132, and Ser136. Residues 145–146 (QS) and Trp190 each bind FMN. Residue 196-198 (RLH) coordinates substrate. Arg200 provides a ligand contact to FMN.

The protein belongs to the pyridoxamine 5'-phosphate oxidase family. As to quaternary structure, homodimer. FMN serves as cofactor.

The catalysed reaction is pyridoxamine 5'-phosphate + O2 + H2O = pyridoxal 5'-phosphate + H2O2 + NH4(+). The enzyme catalyses pyridoxine 5'-phosphate + O2 = pyridoxal 5'-phosphate + H2O2. It participates in cofactor metabolism; pyridoxal 5'-phosphate salvage; pyridoxal 5'-phosphate from pyridoxamine 5'-phosphate: step 1/1. The protein operates within cofactor metabolism; pyridoxal 5'-phosphate salvage; pyridoxal 5'-phosphate from pyridoxine 5'-phosphate: step 1/1. In terms of biological role, catalyzes the oxidation of either pyridoxine 5'-phosphate (PNP) or pyridoxamine 5'-phosphate (PMP) into pyridoxal 5'-phosphate (PLP). This Serratia proteamaculans (strain 568) protein is Pyridoxine/pyridoxamine 5'-phosphate oxidase.